Consider the following 432-residue polypeptide: RING finger protein 44 (432 aa).

The segment at 1-86 is disordered; that stretch reads MRPWALAVTR…GGSPRMLHPA (86 aa). Residues 56–65 show a composition bias toward pro residues; that stretch reads QQPPSRPPHL. The RING-type; atypical zinc finger occupies 380 to 421; it reads CVVCFSDFEARQLLRVLPCNHEFHTKCVDKWLKANRTCPICR.

This chain is RING finger protein 44 (RNF44), found in Homo sapiens (Human).